The following is a 526-amino-acid chain: Inosine-5'-monophosphate dehydrogenase (526 aa).

2 CBS domains span residues 120-179 (FIQD…EDPV) and 183-239 (MATD…PLAS). NAD(+) is bound by residues 276–278 (DSS) and 326–328 (GMG). K(+)-binding residues include G328 and G330. IMP is bound at residue S331. Residue C333 participates in K(+) binding. C333 acts as the Thioimidate intermediate in catalysis. IMP is bound by residues 366 to 368 (DGG) and 389 to 390 (GS). R439 serves as the catalytic Proton acceptor. Residue Q451 coordinates IMP. S506 serves as a coordination point for K(+). The disordered stretch occupies residues 506 to 526 (SAQTEGNVHGLHTHEKKLYSS). Basic and acidic residues predominate over residues 517 to 526 (HTHEKKLYSS).

It belongs to the IMPDH/GMPR family. As to quaternary structure, homotetramer. Requires K(+) as cofactor.

Its subcellular location is the cytoplasm. The enzyme catalyses IMP + NAD(+) + H2O = XMP + NADH + H(+). It participates in secondary metabolite biosynthesis; terpenoid biosynthesis. Its activity is regulated as follows. Mycophenolic acid (MPA) is a non-competitive inhibitor that prevents formation of the closed enzyme conformation by binding to the same site as the amobile flap. In contrast, mizoribine monophosphate (MZP) is a competitive inhibitor that induces the closed conformation. MPA is a potent inhibitor of mammalian IMPDHs but a poor inhibitor of the bacterial enzymes. MZP is a more potent inhibitor of bacterial IMPDH. Catalyzes the conversion of inosine 5'-phosphate (IMP) to xanthosine 5'-phosphate (XMP), the first committed and rate-limiting step in the de novo synthesis of guanine nucleotides, and therefore plays an important role in the regulation of cell growth. Part of the gene cluster that mediates the biosynthesis of mycophenolic acid (MPA), the first isolated antibiotic natural product in the world. Does not play a role in the biosynthesis of MPA, but is involved in self resistance to MPA, since MPA acts as an inhibitor of IMP dehydrogenases. The sequence is that of Inosine-5'-monophosphate dehydrogenase from Penicillium roqueforti (strain FM164).